The following is a 57-amino-acid chain: Large ribosomal subunit protein bL32 (57 aa).

A disordered region spans residues Met1–Lys37.

This sequence belongs to the bacterial ribosomal protein bL32 family.

This chain is Large ribosomal subunit protein bL32, found in Escherichia fergusonii (strain ATCC 35469 / DSM 13698 / CCUG 18766 / IAM 14443 / JCM 21226 / LMG 7866 / NBRC 102419 / NCTC 12128 / CDC 0568-73).